A 381-amino-acid chain; its full sequence is Acetylornithine deacetylase (381 aa).

H78 serves as a coordination point for Zn(2+). D80 is a catalytic residue. D110 lines the Zn(2+) pocket. E142 is a catalytic residue. Zn(2+) is bound by residues E143, E167, and H353.

This sequence belongs to the peptidase M20A family. ArgE subfamily. Homodimer. Requires Zn(2+) as cofactor. The cofactor is Co(2+). It depends on glutathione as a cofactor.

The protein localises to the cytoplasm. The enzyme catalyses N(2)-acetyl-L-ornithine + H2O = L-ornithine + acetate. It participates in amino-acid biosynthesis; L-arginine biosynthesis; L-ornithine from N(2)-acetyl-L-ornithine (linear): step 1/1. Functionally, catalyzes the hydrolysis of the amide bond of N(2)-acetylated L-amino acids. Cleaves the acetyl group from N-acetyl-L-ornithine to form L-ornithine, an intermediate in L-arginine biosynthesis pathway, and a branchpoint in the synthesis of polyamines. In Moritella profunda, this protein is Acetylornithine deacetylase.